The primary structure comprises 446 residues: MLSNYVVKEILNDNKLKREYEFTIDNKYFFSQLDAKLLEIAKNVKIPGFRAGKASIDLIKKEYLNNAVNTLIRKIVEDTSSEFIKNGKFGEIISSNVSVISCPDYGMGVSSTSGDPAGDNLVYKLSFEVMPEAPLIALDDIVLSDIEADIQDSDISEFIENLKKQCSEFVEVSDSEYRVKMGDKVVVDYQNRIKGKMLKGGDTKDLAVIVGRGLVLKDFEDQLIGMKIGESKSFPIQFPDNYGVAYLVGKSADVSVTVKNIFMMKAIEENENVIKYYQFKDEQALKDFARNKIKQQFDKISFAIVKKELFDYLDKTYSIDVPECVVTKEIDKINQEIQDSAGTVQVDVKAEAMKRVKLGILLVKMSRHHNISINKDDVFSFINTYYSDYGISLNDVLRMLQSNKDFANYISGKVLEDKVINYIIRLVKKDKKVMTTQELNLMLENM.

Residues 182 to 267 (GDKVVVDYQN…VKNIFMMKAI (86 aa)) enclose the PPIase FKBP-type domain.

The protein belongs to the FKBP-type PPIase family. Tig subfamily.

It localises to the cytoplasm. It catalyses the reaction [protein]-peptidylproline (omega=180) = [protein]-peptidylproline (omega=0). In terms of biological role, involved in protein export. Acts as a chaperone by maintaining the newly synthesized protein in an open conformation. Functions as a peptidyl-prolyl cis-trans isomerase. This chain is Trigger factor, found in Ehrlichia ruminantium (strain Gardel).